Here is a 67-residue protein sequence, read N- to C-terminus: Protein DsrB (67 aa).

It belongs to the DsrB family.

This chain is Protein DsrB, found in Pectobacterium carotovorum subsp. carotovorum (strain PC1).